The primary structure comprises 612 residues: Siderophore iron transporter 1 (612 aa).

Residues Ser-5, Ser-21, Ser-22, Ser-36, and Ser-41 each carry the phosphoserine modification. The next 14 helical transmembrane spans lie at 91–111 (ISFYICYFSIFLLFFAISFQA), 125–145 (FAGHSLLSTIAVANNIISAAI), 159–179 (LEAFLFSLLLYLVGLILMAAS), 188–208 (GSVLYNAGYTGVELIMTIFMA), 218–238 (LVLGISYLPFVVTIWIGPRVA), 249–269 (WGIAVWTILIPACSIPFLAVY), 299–319 (IIGLILMTAGLALVLLSISLA), 331–351 (FIVMIIIGGLCLIAFVLYEIF), 365–385 (EPTIGACCAMSFLFYITFYCW), 406–426 (YISYTYSFTSCATGFFLGILI), 434–453 (WYFVASIPVYILGQGLMIRY), 464–484 (IMPQIIVGIGGGVIANLLTVA), 495–515 (AIVTALVSTVTPIGGAVGSAI), and 573–593 (ILTSVATGFAGAMIFPVWFVA).

Belongs to the major facilitator superfamily.

The protein localises to the membrane. Its function is as follows. Involved in the transport of siderophore iron and so has a role in iron homeostasis. The sequence is that of Siderophore iron transporter 1 (str1) from Schizosaccharomyces pombe (strain 972 / ATCC 24843) (Fission yeast).